Consider the following 255-residue polypeptide: Ribosomal RNA large subunit methyltransferase E (255 aa).

Positions 50, 52, 68, 84, and 108 each coordinate S-adenosyl-L-methionine. Lys148 serves as the catalytic Proton acceptor. Positions 195–253 (PVRSGEIYDVTVDSVGRTGDGIAMIQGFAVIVKNASPGERLRIKIGPVKQRFAFASILE) constitute a TRAM domain.

The protein belongs to the class I-like SAM-binding methyltransferase superfamily. RNA methyltransferase RlmE family.

It is found in the cytoplasm. It carries out the reaction uridine(2552) in 23S rRNA + S-adenosyl-L-methionine = 2'-O-methyluridine(2552) in 23S rRNA + S-adenosyl-L-homocysteine + H(+). Its function is as follows. Specifically methylates the uridine in position 2552 of 23S rRNA at the 2'-O position of the ribose in the fully assembled 50S ribosomal subunit. The sequence is that of Ribosomal RNA large subunit methyltransferase E from Methanothrix thermoacetophila (strain DSM 6194 / JCM 14653 / NBRC 101360 / PT) (Methanosaeta thermophila).